The sequence spans 399 residues: Argininosuccinate synthase (399 aa).

8 to 16 is an ATP binding site; sequence AYSGGLDTS. 2 residues coordinate L-citrulline: Tyr-87 and Ser-92. Gly-117 serves as a coordination point for ATP. L-aspartate contacts are provided by Thr-119, Asn-123, and Asp-124. Asn-123 contributes to the L-citrulline binding site. 5 residues coordinate L-citrulline: Arg-127, Ser-176, Ser-185, Glu-261, and Tyr-273.

It belongs to the argininosuccinate synthase family. Type 1 subfamily. As to quaternary structure, homotetramer.

The protein resides in the cytoplasm. It carries out the reaction L-citrulline + L-aspartate + ATP = 2-(N(omega)-L-arginino)succinate + AMP + diphosphate + H(+). It functions in the pathway amino-acid biosynthesis; L-arginine biosynthesis; L-arginine from L-ornithine and carbamoyl phosphate: step 2/3. The sequence is that of Argininosuccinate synthase from Clostridioides difficile (strain 630) (Peptoclostridium difficile).